A 154-amino-acid polypeptide reads, in one-letter code: Endoribonuclease YbeY (154 aa).

Zn(2+) is bound by residues His120, His124, and His130.

The protein belongs to the endoribonuclease YbeY family. Zn(2+) serves as cofactor.

The protein resides in the cytoplasm. In terms of biological role, single strand-specific metallo-endoribonuclease involved in late-stage 70S ribosome quality control and in maturation of the 3' terminus of the 16S rRNA. In Oceanobacillus iheyensis (strain DSM 14371 / CIP 107618 / JCM 11309 / KCTC 3954 / HTE831), this protein is Endoribonuclease YbeY.